A 337-amino-acid polypeptide reads, in one-letter code: Phenylalanine--tRNA ligase alpha subunit (337 aa).

E258 contacts Mg(2+).

It belongs to the class-II aminoacyl-tRNA synthetase family. Phe-tRNA synthetase alpha subunit type 1 subfamily. As to quaternary structure, tetramer of two alpha and two beta subunits. Mg(2+) serves as cofactor.

It localises to the cytoplasm. The enzyme catalyses tRNA(Phe) + L-phenylalanine + ATP = L-phenylalanyl-tRNA(Phe) + AMP + diphosphate + H(+). This chain is Phenylalanine--tRNA ligase alpha subunit, found in Burkholderia mallei (strain ATCC 23344).